Consider the following 1049-residue polypeptide: Protein phosphatase Slingshot homolog 1 (1049 aa).

Polar residues predominate over residues 1–12 (MALVTLQRSPTP). The disordered stretch occupies residues 1–28 (MALVTLQRSPTPSAASSSASNSELEAGS). Residue alanine 2 is modified to N-acetylalanine. Over residues 13-25 (SAASSSASNSELE) the composition is skewed to low complexity. 2 positions are modified to phosphoserine: serine 37 and serine 57. The DEK-C domain maps to 249–304 (ERTERLIKAKLRSIMMSQDLENVTSKEIRNELEKQMNCNLKELKEFIDNEMLLILG). The Tyrosine-protein phosphatase domain maps to 308 to 449 (KPSLIFDHLY…LSEYEGILDA (142 aa)). Cysteine 393 acts as the Phosphocysteine intermediate in catalysis. Residues 456 to 499 (KLWRQQTDSSLQQPVDDPAGPGDFLPETPDGTPESQLPFLDDAA) are disordered. Residues 458 to 468 (WRQQTDSSLQQ) are compositionally biased toward polar residues. The residue at position 515 (serine 515) is a Phosphoserine. Disordered regions lie at residues 544-603 (AAPP…RWGQ), 693-787 (HLAS…KPAK), 825-899 (HTKE…KSPP), and 923-955 (PTSS…KQRT). Residues 564-573 (CEKDVKKKLE) are compositionally biased toward basic and acidic residues. The residue at position 576 (serine 576) is a Phosphoserine. The segment covering 731–742 (GAALEPPASLLE) has biased composition (low complexity). Positions 772–787 (VIKEESSPKKDMKPAK) are enriched in basic and acidic residues. Serine 897 is modified (phosphoserine). The interaction with YWHAG stretch occupies residues 897–1049 (SPPPFFYRLD…LKSPSWMSKS (153 aa)). Over residues 925 to 943 (SSSMSSNLTRSSSSDSIHS) the composition is skewed to low complexity. The residue at position 978 (serine 978) is a Phosphoserine. The disordered stretch occupies residues 989 to 1049 (TEDLSSEADP…LKSPSWMSKS (61 aa)). Residues 1001–1013 (VADSQDTTLSESS) are compositionally biased toward polar residues.

Belongs to the protein-tyrosine phosphatase family. As to quaternary structure, interacts with actin and this stimulates phosphatase activity. Also interacts with LIMK1 and with the 14-3-3 proteins YWHAB, YWHAG, YWHAQ, and YWHAZ. Interaction with 14-3-3 proteins inhibits phosphatase activity and also blocks recruitment to lamellipodia and stimulation by actin. In terms of processing, phosphorylated. Inhibitory phosphorylation by PAK4 promotes binding to YWHAZ. Phosphorylation at Ser-978 is decreased by stimuli which promote actin reorganization and lamellipodia formation. Can be dephosphorylated and activated by PPP3CA/calcineurin A. Phosphorylation decreases immediately prior to telophase.

It localises to the cytoplasm. It is found in the cytoskeleton. Its subcellular location is the cell projection. The protein localises to the lamellipodium. The protein resides in the cleavage furrow. It localises to the midbody. The enzyme catalyses O-phospho-L-tyrosyl-[protein] + H2O = L-tyrosyl-[protein] + phosphate. The catalysed reaction is O-phospho-L-seryl-[protein] + H2O = L-seryl-[protein] + phosphate. It carries out the reaction O-phospho-L-threonyl-[protein] + H2O = L-threonyl-[protein] + phosphate. Protein phosphatase which regulates actin filament dynamics. Dephosphorylates and activates the actin binding/depolymerizing factor cofilin, which subsequently binds to actin filaments and stimulates their disassembly. Inhibitory phosphorylation of cofilin is mediated by LIMK1, which may also be dephosphorylated and inactivated by this protein. This Homo sapiens (Human) protein is Protein phosphatase Slingshot homolog 1.